The chain runs to 225 residues: Pre-mRNA-splicing factor SPF27 (225 aa).

Alanine 2 carries the N-acetylalanine modification. Residue serine 94 is modified to Phosphoserine. Residues 138–222 (YNENLVHMIE…HGEANKENIR (85 aa)) are a coiled coil.

It belongs to the SPF27 family. In terms of assembly, component of the pre-catalytic and catalytic spliceosome complexes. Component of the postcatalytic spliceosome P complex. Component of the PRP19-CDC5L splicing complex composed of a core complex comprising a homotetramer of PRPF19, CDC5L, PLRG1 and BCAS2, and at least three less stably associated proteins CTNNBL1, CWC15 and HSPA8. Interacts directly in the complex with PRPF19, CDC5L and PLRG1. In terms of tissue distribution, ubiquitously expressed.

The protein resides in the nucleus. It is found in the nucleolus. Required for pre-mRNA splicing as component of the activated spliceosome. Component of the PRP19-CDC5L complex that forms an integral part of the spliceosome and is required for activating pre-mRNA splicing. May have a scaffolding role in the spliceosome assembly as it contacts all other components of the core complex. The PRP19-CDC5L complex may also play a role in the response to DNA damage (DDR). The polypeptide is Pre-mRNA-splicing factor SPF27 (BCAS2) (Homo sapiens (Human)).